The following is a 952-amino-acid chain: UvrABC system protein A (952 aa).

Residue G38 to S45 participates in ATP binding. A C4-type zinc finger spans residues C259 to C286. ABC transporter domains lie at F316–I595 and G615–S944. G647–S654 contacts ATP. A C4-type zinc finger spans residues C746–C772.

This sequence belongs to the ABC transporter superfamily. UvrA family. In terms of assembly, forms a heterotetramer with UvrB during the search for lesions.

The protein resides in the cytoplasm. Its function is as follows. The UvrABC repair system catalyzes the recognition and processing of DNA lesions. UvrA is an ATPase and a DNA-binding protein. A damage recognition complex composed of 2 UvrA and 2 UvrB subunits scans DNA for abnormalities. When the presence of a lesion has been verified by UvrB, the UvrA molecules dissociate. This chain is UvrABC system protein A, found in Mycoplasma genitalium (strain ATCC 33530 / DSM 19775 / NCTC 10195 / G37) (Mycoplasmoides genitalium).